Here is a 417-residue protein sequence, read N- to C-terminus: NADH-quinone oxidoreductase subunit D (417 aa).

This sequence belongs to the complex I 49 kDa subunit family. NDH-1 is composed of 14 different subunits. Subunits NuoB, C, D, E, F, and G constitute the peripheral sector of the complex.

It localises to the cell inner membrane. It catalyses the reaction a quinone + NADH + 5 H(+)(in) = a quinol + NAD(+) + 4 H(+)(out). Functionally, NDH-1 shuttles electrons from NADH, via FMN and iron-sulfur (Fe-S) centers, to quinones in the respiratory chain. The immediate electron acceptor for the enzyme in this species is believed to be ubiquinone. Couples the redox reaction to proton translocation (for every two electrons transferred, four hydrogen ions are translocated across the cytoplasmic membrane), and thus conserves the redox energy in a proton gradient. The polypeptide is NADH-quinone oxidoreductase subunit D (Polaromonas naphthalenivorans (strain CJ2)).